Here is a 353-residue protein sequence, read N- to C-terminus: Photosystem II D2 protein (353 aa).

At threonine 2 the chain carries N-acetylthreonine. Threonine 2 is modified (phosphothreonine). Residues 41–61 (CAYFAVGGWFTGTTFVTSWYT) form a helical membrane-spanning segment. Histidine 118 lines the chlorophyll a pocket. The chain crosses the membrane as a helical span at residues 125–141 (GFMLRQFELARSVQLRP). Pheophytin a-binding residues include glutamine 130 and asparagine 143. A helical transmembrane segment spans residues 153–166 (VFVSVFLIYPLGQS). Chlorophyll a is bound at residue histidine 198. A helical membrane pass occupies residues 208–228 (AALLCAIHGATVENTLFEDGD). A plastoquinone-binding residues include histidine 215 and phenylalanine 262. Position 215 (histidine 215) interacts with Fe cation. Histidine 269 is a Fe cation binding site. Residues 279–295 (GLWMSALGVVGLALNLR) traverse the membrane as a helical segment.

Belongs to the reaction center PufL/M/PsbA/D family. As to quaternary structure, PSII is composed of 1 copy each of membrane proteins PsbA, PsbB, PsbC, PsbD, PsbE, PsbF, PsbH, PsbI, PsbJ, PsbK, PsbL, PsbM, PsbT, PsbX, PsbY, PsbZ, Psb30/Ycf12, at least 3 peripheral proteins of the oxygen-evolving complex and a large number of cofactors. It forms dimeric complexes. It depends on The D1/D2 heterodimer binds P680, chlorophylls that are the primary electron donor of PSII, and subsequent electron acceptors. It shares a non-heme iron and each subunit binds pheophytin, quinone, additional chlorophylls, carotenoids and lipids. There is also a Cl(-1) ion associated with D1 and D2, which is required for oxygen evolution. The PSII complex binds additional chlorophylls, carotenoids and specific lipids. as a cofactor.

Its subcellular location is the plastid. The protein localises to the chloroplast thylakoid membrane. The enzyme catalyses 2 a plastoquinone + 4 hnu + 2 H2O = 2 a plastoquinol + O2. Functionally, photosystem II (PSII) is a light-driven water:plastoquinone oxidoreductase that uses light energy to abstract electrons from H(2)O, generating O(2) and a proton gradient subsequently used for ATP formation. It consists of a core antenna complex that captures photons, and an electron transfer chain that converts photonic excitation into a charge separation. The D1/D2 (PsbA/PsbD) reaction center heterodimer binds P680, the primary electron donor of PSII as well as several subsequent electron acceptors. D2 is needed for assembly of a stable PSII complex. In Cicer arietinum (Chickpea), this protein is Photosystem II D2 protein.